Consider the following 945-residue polypeptide: Microtubule cross-linking factor 3 (945 aa).

Composition is skewed to low complexity over residues 1–23 (MSQP…AAAT), 72–93 (QQQL…TSGT), and 110–126 (PKGA…GAEG). A signal peptide spans 1–25 (MSQPPSGGAAPAATSASAAAAATEA). 4 disordered regions span residues 1-250 (MSQP…SYWK), 265-293 (KERA…PVAG), 307-366 (SPMA…TLKN), and 494-522 (LSLK…DNED). Basic and acidic residues predominate over residues 141-151 (GQPEEAPREIE). Gly residues predominate over residues 164–179 (GGVGGGGEGGGAGGGP). The span at 219–235 (TAATSKTPGPGSRNSGS) shows a compositional bias: low complexity. Gly residues predominate over residues 236 to 247 (GSTGSGSGGGGS). Residues 328–345 (AMQAAAPPSSQPHSQQLQ) are compositionally biased toward low complexity. The stretch at 340 to 724 (HSQQLQEQED…GKVMQLQYEN (385 aa)) forms a coiled coil. 2 stretches are compositionally biased toward basic and acidic residues: residues 353–366 (EMEK…TLKN) and 494–511 (LSLK…EKKA). Residue serine 567 is modified to Phosphoserine. The interval 741 to 811 (GIRGSPRDSD…PWPKSFSDRQ (71 aa)) is disordered. A compositionally biased stretch (basic and acidic residues) spans 745 to 766 (SPRDSDAESDAGKKESDDDSRP). Serine 779 bears the Phosphoserine mark. Positions 809-833 (DRQQMKDIRSEAERLGKTIDRLIAD) form a coiled coil. The chain crosses the membrane as a helical span at residues 913–933 (PIILLILILVLFSSLSYTTIF).

It belongs to the MTCL family.

It is found in the membrane. This Mus musculus (Mouse) protein is Microtubule cross-linking factor 3 (Mtcl3).